We begin with the raw amino-acid sequence, 360 residues long: Photosystem II protein D1 1 (360 aa).

The next 3 membrane-spanning stretches (helical) occupy residues 29-46 (YVGWFGVLMIPTLLAATV), 118-133 (HFLIGCACYLGRQWEL), and 142-156 (WICVAYSAPLASATA). H118 is a chlorophyll a binding site. Y126 contacts pheophytin a. [CaMn4O5] cluster contacts are provided by D170 and E189. The helical transmembrane segment at 197–218 (FHMLGVAGVFGGSLFSAMHGSL) threads the bilayer. H198 provides a ligand contact to chlorophyll a. A quinone is bound by residues H215 and 264–265 (SF). Residue H215 participates in Fe cation binding. H272 is a Fe cation binding site. A helical transmembrane segment spans residues 274–288 (FLAAWPVIGIWFTAL). H332, E333, D342, and A344 together coordinate [CaMn4O5] cluster. Positions 345 to 360 (AGEVAPVALTAPAING) are excised as a propeptide.

It belongs to the reaction center PufL/M/PsbA/D family. As to quaternary structure, PSII is composed of 1 copy each of membrane proteins PsbA, PsbB, PsbC, PsbD, PsbE, PsbF, PsbH, PsbI, PsbJ, PsbK, PsbL, PsbM, PsbT, PsbX, PsbY, PsbZ, Psb30/Ycf12, peripheral proteins PsbO, CyanoQ (PsbQ), PsbU, PsbV and a large number of cofactors. It forms dimeric complexes. The cofactor is The D1/D2 heterodimer binds P680, chlorophylls that are the primary electron donor of PSII, and subsequent electron acceptors. It shares a non-heme iron and each subunit binds pheophytin, quinone, additional chlorophylls, carotenoids and lipids. D1 provides most of the ligands for the Mn4-Ca-O5 cluster of the oxygen-evolving complex (OEC). There is also a Cl(-1) ion associated with D1 and D2, which is required for oxygen evolution. The PSII complex binds additional chlorophylls, carotenoids and specific lipids.. Tyr-161 forms a radical intermediate that is referred to as redox-active TyrZ, YZ or Y-Z. In terms of processing, C-terminally processed by CtpA; processing is essential to allow assembly of the oxygen-evolving complex and thus photosynthetic growth.

It is found in the cellular thylakoid membrane. It carries out the reaction 2 a plastoquinone + 4 hnu + 2 H2O = 2 a plastoquinol + O2. Its function is as follows. Photosystem II (PSII) is a light-driven water:plastoquinone oxidoreductase that uses light energy to abstract electrons from H(2)O, generating O(2) and a proton gradient subsequently used for ATP formation. It consists of a core antenna complex that captures photons, and an electron transfer chain that converts photonic excitation into a charge separation. The D1/D2 (PsbA/PsbD) reaction center heterodimer binds P680, the primary electron donor of PSII as well as several subsequent electron acceptors. The polypeptide is Photosystem II protein D1 1 (Nostoc sp. (strain PCC 7120 / SAG 25.82 / UTEX 2576)).